The chain runs to 863 residues: Eukaryotic translation initiation factor 3 subunit C (863 aa).

Residues 1–92 (MSRFFRGGDD…VKSAKDKRFD (92 aa)) form a disordered region. A compositionally biased stretch (acidic residues) spans 16–53 (SSDEEELYSTSEEEEEEDQDQEESSEEEDEEESSDEDE). Residues 79-92 (GATKVKSAKDKRFD) show a composition bias toward basic and acidic residues. Positions 604 to 778 (FHMHINLELL…KTVIFRKGVE (175 aa)) constitute a PCI domain. Residues 808 to 863 (TQGSANAFSRKDGRQGGQRGGGQRSGRGGARAGGNAQRQAGGTQFTGGALGAAVRG) are disordered. The span at 822–839 (QGGQRGGGQRSGRGGARA) shows a compositional bias: gly residues. A compositionally biased stretch (low complexity) spans 840–850 (GGNAQRQAGGT).

It belongs to the eIF-3 subunit C family. Component of the eukaryotic translation initiation factor 3 (eIF-3) complex.

It is found in the cytoplasm. Its function is as follows. Component of the eukaryotic translation initiation factor 3 (eIF-3) complex, which is involved in protein synthesis of a specialized repertoire of mRNAs and, together with other initiation factors, stimulates binding of mRNA and methionyl-tRNAi to the 40S ribosome. The eIF-3 complex specifically targets and initiates translation of a subset of mRNAs involved in cell proliferation. The polypeptide is Eukaryotic translation initiation factor 3 subunit C (Chaetomium globosum (strain ATCC 6205 / CBS 148.51 / DSM 1962 / NBRC 6347 / NRRL 1970) (Soil fungus)).